Reading from the N-terminus, the 289-residue chain is Rhodopsin (289 aa).

Residues 1–7 lie on the Extracellular side of the membrane; sequence YLVNPAA. The helical transmembrane segment at 8–32 threads the bilayer; sequence YAALGAYMFLLILIGFPINFLTLYV. At 33 to 44 the chain is on the cytoplasmic side; the sequence is TLEHKKLRTPLN. The chain crosses the membrane as a helical span at residues 45-67; the sequence is YILLNLAVGNLFMVLGGFTTTMY. The Extracellular portion of the chain corresponds to 68-81; the sequence is TSMHGYFVLGRLGC. Residues Cys81 and Cys158 are joined by a disulfide bond. Residues 82 to 104 traverse the membrane as a helical segment; the sequence is NLEGFFATLGGEIALWSLVVLAI. The 'Ionic lock' involved in activated form stabilization signature appears at 105 to 107; it reads ERW. The Cytoplasmic segment spans residues 105-123; sequence ERWIVVCKPISKFRFTEDH. Residues 124 to 144 traverse the membrane as a helical segment; the sequence is AIMGLAFSWVMGLACAVPPLV. The Extracellular segment spans residues 145–173; it reads GWSRYIPEGMKCSCGVDYYTRAEGFNNES. The N-linked (GlcNAc...) asparagine glycan is linked to Asn171. The chain crosses the membrane as a helical span at residues 174–195; the sequence is FVIYMFIVHFLIPLSVIFFCYG. Residues 196–223 lie on the Cytoplasmic side of the membrane; the sequence is RLLCAVKEAAAAQQESETTQRAEKEVSR. Residues 224–245 form a helical membrane-spanning segment; sequence MVVIMVIGFLVCWLPYASVAWW. Residues 246–257 are Extracellular-facing; it reads IFCNQGSDFGPI. A helical transmembrane segment spans residues 258–279; it reads FMTLPSFFAKRPAIYNPMIYIC. Residue Lys267 is modified to N6-(retinylidene)lysine. Residues 280–289 are Cytoplasmic-facing; that stretch reads MNKQFRHCMI.

It belongs to the G-protein coupled receptor 1 family. Opsin subfamily. Phosphorylated on some or all of the serine and threonine residues present in the C-terminal region. In terms of processing, contains one covalently linked retinal chromophore.

The protein localises to the membrane. The protein resides in the cell projection. It localises to the cilium. It is found in the photoreceptor outer segment. Functionally, photoreceptor required for image-forming vision at low light intensity. While most salt water fish species use retinal as chromophore, most freshwater fish use 3-dehydroretinal, or a mixture of retinal and 3-dehydroretinal. Light-induced isomerization of 11-cis to all-trans retinal triggers a conformational change that activates signaling via G-proteins. Subsequent receptor phosphorylation mediates displacement of the bound G-protein alpha subunit by arrestin and terminates signaling. The protein is Rhodopsin (rho) of Cottinella boulengeri (Short-headed sculpin).